The chain runs to 238 residues: 2-C-methyl-D-erythritol 4-phosphate cytidylyltransferase (238 aa).

This sequence belongs to the IspD/TarI cytidylyltransferase family. IspD subfamily.

The catalysed reaction is 2-C-methyl-D-erythritol 4-phosphate + CTP + H(+) = 4-CDP-2-C-methyl-D-erythritol + diphosphate. The protein operates within isoprenoid biosynthesis; isopentenyl diphosphate biosynthesis via DXP pathway; isopentenyl diphosphate from 1-deoxy-D-xylulose 5-phosphate: step 2/6. Functionally, catalyzes the formation of 4-diphosphocytidyl-2-C-methyl-D-erythritol from CTP and 2-C-methyl-D-erythritol 4-phosphate (MEP). The sequence is that of 2-C-methyl-D-erythritol 4-phosphate cytidylyltransferase from Shewanella amazonensis (strain ATCC BAA-1098 / SB2B).